The primary structure comprises 62 residues: SISACNGLKGHFLIEPLKLSDSEKTDLLNRSHDNAQLSPINLVVAVIMAHEMGHGMVLPGTK.

The Peptidase M12B domain maps to 24 to 54; that stretch reads KTDLLNRSHDNAQLSPINLVVAVIMAHEMGH. N-linked (GlcNAc...) asparagine glycosylation occurs at N29. A Zn(2+)-binding site is contributed by H50. Residue E51 is part of the active site. H54 contributes to the Zn(2+) binding site.

It belongs to the venom metalloproteinase (M12B) family. P-III subfamily. P-IIIc sub-subfamily. Dimer. Zn(2+) is required as a cofactor. In terms of processing, the N-terminus is blocked. As to expression, expressed by the venom gland.

It is found in the secreted. With respect to regulation, inhibited by EDTA, and 1,10-phenanthroline. In terms of biological role, snake venom Zinc metalloproteinase that inhibits ADP-induced platelet aggregation and inhibits the alpha-5/beta-1 (ITGA5/ITGB1) integrin, a fibronectin receptor. Has caseinolytic activity. Induces the detachment of cells that are bound to fibronectin. This is Zinc metalloproteinase-disintegrin-like BaG from Bothrops alternatus (Urutu).